A 231-amino-acid chain; its full sequence is Orotidine 5'-phosphate decarboxylase (231 aa).

Residues aspartate 11, lysine 33, 60–69, threonine 120, arginine 181, glutamine 190, glycine 210, and arginine 211 each bind substrate; that span reads DLKFHDIPNT. Lysine 62 acts as the Proton donor in catalysis.

Belongs to the OMP decarboxylase family. Type 1 subfamily. Homodimer.

The catalysed reaction is orotidine 5'-phosphate + H(+) = UMP + CO2. It functions in the pathway pyrimidine metabolism; UMP biosynthesis via de novo pathway; UMP from orotate: step 2/2. Its function is as follows. Catalyzes the decarboxylation of orotidine 5'-monophosphate (OMP) to uridine 5'-monophosphate (UMP). The sequence is that of Orotidine 5'-phosphate decarboxylase from Vibrio atlanticus (strain LGP32) (Vibrio splendidus (strain Mel32)).